A 327-amino-acid polypeptide reads, in one-letter code: Alkene monooxygenase system, ferredoxin--NAD(+) reductase component (327 aa).

Residues 1–89 enclose the 2Fe-2S ferredoxin-type domain; it reads MRLNDGRSFS…DLEINVRAGD (89 aa). Residues Cys-32, Cys-37, Cys-40, and Cys-73 each contribute to the [2Fe-2S] cluster site. The FAD-binding FR-type domain maps to 96–194; the sequence is PRRHAARVTV…EGPYGRAYLR (99 aa).

Belongs to the bacterial ring-hydroxylating dioxygenase ferredoxin reductase family. In terms of assembly, monomer. The alkene monooxygenase multicomponent enzyme system is composed of an electron transfer component and a monooxygenase component interacting with the effector protein XamoD. The electron transfer component is composed of a ferredoxin reductase (XamoF) and a ferredoxin (XamoC), and the monooxygenase component is formed by a heterohexamer (dimer of heterotrimers) of two alpha subunits (XamoA), two beta subunits (XamoE) and two gamma subunits (XamoB). FAD serves as cofactor. Requires [2Fe-2S] cluster as cofactor.

It localises to the cytoplasm. The enzyme catalyses 2 reduced [2Fe-2S]-[ferredoxin] + NAD(+) + H(+) = 2 oxidized [2Fe-2S]-[ferredoxin] + NADH. In terms of biological role, reductase component of the alkene monooxygenase multicomponent enzyme system which catalyzes the O2- and NADH-dependent epoxidation of short chain (C2 to C6) alkenes to their corresponding epoxides. Ferredoxin reductase catalyzes the transfer of electrons from NADH to ferredoxin (XamoC). NADPH is also effective but with a rate approximately 3-fold lower than with NADH. This is Alkene monooxygenase system, ferredoxin--NAD(+) reductase component from Xanthobacter autotrophicus (strain ATCC BAA-1158 / Py2).